We begin with the raw amino-acid sequence, 313 residues long: Ribosomal RNA small subunit methyltransferase H (313 aa).

S-adenosyl-L-methionine-binding positions include 35 to 37 (GGH), Asp55, Phe79, Asp101, and Gln108.

It belongs to the methyltransferase superfamily. RsmH family.

Its subcellular location is the cytoplasm. The enzyme catalyses cytidine(1402) in 16S rRNA + S-adenosyl-L-methionine = N(4)-methylcytidine(1402) in 16S rRNA + S-adenosyl-L-homocysteine + H(+). Its function is as follows. Specifically methylates the N4 position of cytidine in position 1402 (C1402) of 16S rRNA. This is Ribosomal RNA small subunit methyltransferase H from Escherichia coli O7:K1 (strain IAI39 / ExPEC).